The chain runs to 564 residues: MSEAEKKASQDAQHKEPMADSETQLDSDSAPSSQAEKPAKTKYPLSFWLAFGALCLTGLISAMEGSIVSTSLPSIIAELKAAFQPLYGQLADLWGRRYVMILATAIFLLGSGICGGANSMDMLIWGRAVQGIGAGGINMLVDLIICDLVPMRERGNFIGLLFLFVSIGTTSGPIIGGALTDNTTWRWVFYINLPMGGAALVLLVLFLQVKWKKELSTRDRLKRIDVVGNAILVGATFSILYALTYGGTRYPWSAANIVAPFVLGFVGLGIFIAWESNKRWCPYPVMPLHHFNSRTASASFFISFMTMILAFWVVYFYPVYFQSVLGNTPTISGVHLLPFEVSFPIFAAVGGGLVSKTGRYKPIHMVATSIVTIAIGASSVLTQHTHKAAWAVLQIFIGMGLGSLISTTLQAVQAGLPESETAASTATWAYMRSLGTIWGVSVPAAIFNNRFDQLSGQLDPSIRDNFVRGQAYEHATAQFVQSFEPATREVVIGAYTDALRRVWLVSIAFGAVTVLSTLFEKELTLRTELDSEFGLAEKKGDAKGDVERGEGQNDSREGGQNENV.

Residues 1–18 are compositionally biased toward basic and acidic residues; it reads MSEAEKKASQDAQHKEPM. Residues 1–37 are disordered; it reads MSEAEKKASQDAQHKEPMADSETQLDSDSAPSSQAEK. Over residues 21-35 the composition is skewed to polar residues; it reads SETQLDSDSAPSSQA. Transmembrane regions (helical) follow at residues 43-63, 98-118, 131-151, and 157-177; these read YPLSFWLAFGALCLTGLISAM, YVMILATAIFLLGSGICGGAN, GIGAGGINMLVDLIICDLVPM, and FIGLLFLFVSIGTTSGPIIGG. N-linked (GlcNAc...) asparagine glycosylation is present at Asn-182. The next 9 helical transmembrane spans lie at 187 to 207, 226 to 246, 254 to 274, 300 to 320, 334 to 354, 362 to 382, 389 to 409, 427 to 447, and 502 to 522; these read WVFYINLPMGGAALVLLVLFL, VVGNAILVGATFSILYALTYG, AANIVAPFVLGFVGLGIFIAW, FFISFMTMILAFWVVYFYPVY, VHLLPFEVSFPIFAAVGGGLV, PIHMVATSIVTIAIGASSVLT, AWAVLQIFIGMGLGSLISTTL, TWAYMRSLGTIWGVSVPAAIF, and VWLVSIAFGAVTVLSTLFEKE. The tract at residues 540–564 is disordered; the sequence is GDAKGDVERGEGQNDSREGGQNENV. An N-linked (GlcNAc...) asparagine glycan is attached at Asn-553.

This sequence belongs to the major facilitator superfamily.

The protein resides in the cell membrane. Its function is as follows. MFS-type efflux transporter; part of the gene cluster that mediates the biosynthesis of the cytotoxic leucine-containing cytochalasans, including aspochalasin C, aspochalasin E, TMC-169, flavichalasine F, aspergillin PZ, aspochalasin M and flavichalasine G. FfsH might be involved in the excretion of cytochalasans. This Aspergillus flavipes protein is MFS-type efflux transporter ffsH.